The following is a 467-amino-acid chain: Gamma-aminobutyric acid receptor subunit gamma-2 (467 aa).

Residues 1–39 (MSSPNIWSTGSSVYSTPVFSQKMTVWILLLLSLYPGFTS) form the signal peptide. Residues 40–275 (QKSDDDYEDY…FDLSRRMGYF (236 aa)) lie on the Extracellular side of the membrane. Residues Asn-52 and Asn-129 are each glycosylated (N-linked (GlcNAc...) asparagine). Cys-190 and Cys-204 are oxidised to a cystine. N-linked (GlcNAc...) asparagine glycosylation is present at Asn-247. The chain crosses the membrane as a helical span at residues 276–296 (TIQTYIPCTLIVVLSWVSFWI). Topologically, residues 297-302 (NKDAVP) are cytoplasmic. The helical transmembrane segment at 303–322 (ARTSLGITTVLTMTTLSTIA) threads the bilayer. Residues 323–334 (RKSLPKVSYVTA) are Extracellular-facing. A helical transmembrane segment spans residues 335 to 359 (MDLFVSVCFIFVFSALVEYGTLHYF). Topologically, residues 360–443 (VSNRKPSKDK…IHIRIAKMDS (84 aa)) are cytoplasmic. An interaction with GABARAP region spans residues 425-442 (RTGAWRHGRIHIRIAKMD). The helical transmembrane segment at 444-464 (YARIFFPTAFCLFNLVYWVSY) threads the bilayer. Residues 465–467 (LYL) lie on the Extracellular side of the membrane.

This sequence belongs to the ligand-gated ion channel (TC 1.A.9) family. Gamma-aminobutyric acid receptor (TC 1.A.9.5) subfamily. GABRG2 sub-subfamily. As to quaternary structure, heteropentamer, formed by a combination of alpha (GABRA1-6), beta (GABRB1-3), gamma (GABRG1-3), delta (GABRD), epsilon (GABRE), rho (GABRR1-3), pi (GABRP) and theta (GABRQ) chains, each subunit exhibiting distinct physiological and pharmacological properties. Interacts with GABARAP. Interacts with KIF21B. Identified in a complex of 720 kDa composed of LHFPL4, NLGN2, GABRA1, GABRB2, GABRG2 and GABRB3. Interacts with LHFPL4. Interacts with SHISA7; interaction leads to the regulation of GABA(A) receptor trafficking, channel deactivation kinetics and pharmacology. Palmitoylated by ZDHHC3/GODZ; required for the accumulation of GABA(A) receptors at the postsynaptic membrane of inhibitory GABAergic synapses. Post-translationally, glycosylated.

It is found in the postsynaptic cell membrane. It localises to the cell membrane. The protein resides in the cell projection. Its subcellular location is the dendrite. The protein localises to the cytoplasmic vesicle membrane. The catalysed reaction is chloride(in) = chloride(out). Allosterically activated by benzodiazepines. Activated by pentobarbital. Inhibited by the antagonist bicuculline. Inhibited by zinc ions. Potentiated by histamine. Functionally, gamma subunit of the heteropentameric ligand-gated chloride channel gated by gamma-aminobutyric acid (GABA), a major inhibitory neurotransmitter in the brain. GABA-gated chloride channels, also named GABA(A) receptors (GABAAR), consist of five subunits arranged around a central pore and contain GABA active binding site(s) located at the alpha and beta subunit interface(s). When activated by GABA, GABAARs selectively allow the flow of chloride anions across the cell membrane down their electrochemical gradient. Gamma-2/GABRG2-containing GABAARs are found at both synaptic and extrasynaptic sites. Chloride influx into the postsynaptic neuron following GABAAR opening decreases the neuron ability to generate a new action potential, thereby reducing nerve transmission. GABAARs containing alpha-1 and beta-2 or -3 subunits exhibit synaptogenic activity; the gamma-2 subunit being necessary but not sufficient to induce rapid synaptic contacts formation. Extrasynaptic gamma-2-containing receptors contribute to the tonic GABAergic inhibition. GABAARs function also as histamine receptor where histamine binds at the interface of two neighboring beta subunits and potentiates GABA response in a gamma-2 subunit-controlled manner. The protein is Gamma-aminobutyric acid receptor subunit gamma-2 (GABRG2) of Pongo abelii (Sumatran orangutan).